The chain runs to 643 residues: RNA-binding protein RO60 (643 aa).

One can recognise a TROVE domain in the interval 63–473 (VENNAGGFVF…AFVNAPPTGK (411 aa)). An RNA-binding region spans residues 186-390 (RTPTHLFEFV…SMPMTAMIRN (205 aa)). The VWFA-like domain stretch occupies residues 465 to 643 (FVNAPPTGKR…IVHEFVTGKI (179 aa)). A divalent metal cation-binding residues include Ser482, Ser484, and Thr549.

This sequence belongs to the Ro 60 kDa family.

The protein resides in the cytoplasm. RNA-binding protein that binds to misfolded non-coding RNAs, pre-5S rRNA, and several small cytoplasmic RNA molecules known as Y RNAs. This is RNA-binding protein RO60 from Caenorhabditis elegans.